Here is a 60-residue protein sequence, read N- to C-terminus: uncharacterized protein (60 aa).

The helical transmembrane segment at 27–49 threads the bilayer; sequence YYWLVSTARMVLGVTILILILIG.

It localises to the membrane. This is an uncharacterized protein from Archaeoglobus fulgidus (strain ATCC 49558 / DSM 4304 / JCM 9628 / NBRC 100126 / VC-16).